The following is a 409-amino-acid chain: MASQDGTTELLSQSVNSTCIPGSTYHVDRGRASSASTPPTSPPLSEVDYTPLLESTQEPRHEYTQLAHSLVKAMADYVGHLQEENLPMPSLEPAAQVHGGLKVQGGVAARDTVVKLAQKIVAMTMDPEMKLFISSLQFHFCSSLKVAIDLRVHELDECFRASSRQADALALARYREPHEADTLGFGLAFNTTANFWEVLARDTEGKRSQRFNRAMRAVNINALEVIPRIYPFNRIGGNGLLVDVGGGLGQVARAIMATNQGSRLQRCIVQDVCAADDVLEEVLESNRKLGVELQRHDFFDKQPVTGASIYFFRHIFHDWPDRACVKILKQIVQAMGRDSRLLICDQVVDDEPSIPATLYDIDMWTLFGGKERNRSEWEALFRAADERLYIKKVWTTTEAPTTILEVCLW.

The span at 1-21 shows a compositional bias: polar residues; sequence MASQDGTTELLSQSVNSTCIP. The segment at 1-46 is disordered; the sequence is MASQDGTTELLSQSVNSTCIPGSTYHVDRGRASSASTPPTSPPLSE. Position 271 (Asp271) interacts with S-adenosyl-L-methionine. The active-site Proton acceptor is the His317.

This sequence belongs to the class I-like SAM-binding methyltransferase superfamily. Cation-independent O-methyltransferase family.

Its pathway is mycotoxin biosynthesis. O-methyltransferase; part of the gene cluster that mediates the biosynthesis of the mycotoxin pyrichalasin H, a tyrosine-derived cytochalasan that inhibits the growth of rice seedlings, but also inhibits lymphocyte capping and actin polymerization and alters cell morphology. Pyrichalasin H is indicated as the responsible agent for the genus-specific pathogenicity of M.grisea toward crabgrass. The first step in the pathway is catalyzed by the O-methyltransferase pyiA which methylates free tyrosine to generate the precursor O-methyltyrosine. The hybrid PKS-NRPS pyiS, assisted by the enoyl reductase pyiC, are responsible for fusion of the O-methyltyrosine precursor and the polyketide backbone. The polyketide synthase module (PKS) of pyiS is responsible for the synthesis of the polyketide backbone and the downstream nonribosomal peptide synthetase (NRPS) amidates the carboxyl end of the polyketide with the O-methyltyrosine precursor. As the NRPS A-domain demonstrates substrate tolerance, pyiS can also use phenylalanine, tyrosine and even para-chlorophenylalanine as amino acid precursor, which leads to the production of novel cytochalasans, including halogenated cytochalasans. Because pyiS lacks a designated enoylreductase (ER) domain, the required activity is provided the enoyl reductase pyiC. Reduction by the hydrolyase pyiE leads to 1,5-dihydropyrrolone, which is substrate for dehydration and intra-molecular Diels-Alder cyclization by the Diels-Alderase pyiF to yield the required isoindolone-fused macrocycle. The tailoring cytochrome P450 monooxygenases piyD and piyG catalyze the hydroxylation at C-18 and C-7, respectivily, whereas the short-chain dehydrogenase/reductase pyiH reduces the carbonyl at C-21 in preparation for the transfer of an acetyl group by the acetyltransferase pyiB. These 3 reactions whose order is not clear yet, lead to the production of O-methylpyrichalasin J, a deacetylated pyrichalasin H. Finally, pyiB to converts O-methylpyrichalasin J into the final product pyrichalasin H via acetylation of C-21. The polypeptide is O-methyltransferase pyiA (Pyricularia grisea (Crabgrass-specific blast fungus)).